A 192-amino-acid chain; its full sequence is MINKTLLGLSLGALMFTAGSAVAADYKIDKEGQHAFIEFRIKHLGYSWLYGSFNDFDGSFTFDDKNPAADKVNVVINTNSVDTNHAERDKHLRGKSFLNVAKFPQATFESTEVKKNGDGYSVIGNLTLNGVTKPVTLESKLTGQGNDPWGGYRAGFEANGNIKLKDFNITTDLGPASQEVELILSVEGVQVK.

The N-terminal stretch at Met-1 to Ala-23 is a signal peptide.

The protein belongs to the UPF0312 family. Type 1 subfamily.

It is found in the periplasm. This Yersinia pseudotuberculosis serotype O:3 (strain YPIII) protein is UPF0312 protein YPK_1931.